Here is a 320-residue protein sequence, read N- to C-terminus: tRNA dimethylallyltransferase (320 aa).

Residue 17–24 (GPTASGKT) participates in ATP binding. 19–24 (TASGKT) is a substrate binding site. Interaction with substrate tRNA regions lie at residues 42–45 (DSAL), 166–170 (QRIQR), and 249–254 (RCVGYR).

Belongs to the IPP transferase family. In terms of assembly, monomer. It depends on Mg(2+) as a cofactor.

It catalyses the reaction adenosine(37) in tRNA + dimethylallyl diphosphate = N(6)-dimethylallyladenosine(37) in tRNA + diphosphate. Its function is as follows. Catalyzes the transfer of a dimethylallyl group onto the adenine at position 37 in tRNAs that read codons beginning with uridine, leading to the formation of N6-(dimethylallyl)adenosine (i(6)A). This chain is tRNA dimethylallyltransferase, found in Herminiimonas arsenicoxydans.